The primary structure comprises 467 residues: Proton extrusion protein PxcA (467 aa).

A disordered region spans residues 183 to 205; that stretch reads TSPPQLIRPRTEQNKKPRGKADT. Positions 191–203 are enriched in basic and acidic residues; that stretch reads PRTEQNKKPRGKA. Helical transmembrane passes span 249–269, 352–372, 391–411, and 427–447; these read FILL…ALIV, IFSV…IMVL, IIIL…WEVI, and FIFL…KYWI.

The protein belongs to the CemA family.

The protein localises to the cell inner membrane. Functionally, required for H(+) efflux immediately after light irradiation to form a rapid H(+) concentration gradient across the thylakoid membranes. Together with PxcL, contributes to transient H(+) uptake following dark to light transition. The protein is Proton extrusion protein PxcA of Trichormus variabilis (strain ATCC 29413 / PCC 7937) (Anabaena variabilis).